We begin with the raw amino-acid sequence, 294 residues long: Homeobox protein Nkx-2.5 (294 aa).

Disordered stretches follow at residues 48-69 (GSEP…PAAF) and 102-122 (EQEK…RRKP). Pro residues predominate over residues 52–69 (PALPELPEPPPAKPPAAF). A compositionally biased stretch (basic and acidic residues) spans 102–114 (EQEKRELEDPERP). The homeobox DNA-binding region spans 119 to 178 (RRKPRVLFSQAQVYELERRFKQQKYLSAPERDHLANVLKLTSTQVKIWFQNRRYKCKRQR).

The protein belongs to the NK-2 homeobox family. As to quaternary structure, homodimer (via the homeobox); binds DNA as homodimer.

It is found in the nucleus. Transcription factor required for the development of the heart and the spleen. Implicated in commitment to and/or differentiation of the myocardial lineage. Binds to the core DNA motif of promoter. The sequence is that of Homeobox protein Nkx-2.5 (NKX-2.5) from Gallus gallus (Chicken).